The chain runs to 405 residues: MSEQRALKNPYPDYTGLGCAQDLFDMQGNLTQHFATSISSKISELLAILENGLKNADPRDCTGYTGWAGIALLYLHLHSVFGDPTFLQRALDYVNRSLRSLTQRWVTFLCGDAGPLAIAAVVYHRLQKHQESDECLNRLLQLQPSVVQGKGRLPDELLYGRTGYLYSLIFVNQQFQQEKIPFQYIQQICDAILESGQILSQRNKIQDQSPLMYEWYQEEYVGAAHGLSGIYYYLMQPGLVAGQDRVFSLVKPSVNYVCQLKFPSGNYAPCVGDARDLLVHWCHGSPGVIYMLIQAFKVFGVRQYLEDALQCGEVIWQRGLLKKGYGLCHGAAGNAYGFLALYKITQDPKHLYRACMFADWCMNYGRHGCRTPDTPFSLFEGMAGTIYFLADLLQPARAKFPCFEV.

Cysteine 282 is a Zn(2+) binding site. Glutathione is bound at residue lysine 323. Zn(2+) is bound by residues cysteine 328 and histidine 329. 370-373 lines the glutathione pocket; sequence RTPD.

Belongs to the LanC-like protein family.

Its subcellular location is the cytoplasm. It is found in the cell membrane. It carries out the reaction RX + glutathione = an S-substituted glutathione + a halide anion + H(+). The enzyme catalyses 1-chloro-2,4-dinitrobenzene + glutathione = 2,4-dinitrophenyl-S-glutathione + chloride + H(+). Functionally, functions as a glutathione transferase. Catalyzes conjugation of the glutathione (GSH) to artificial substrates 1-chloro-2,4-dinitrobenzene (CDNB) and p-nitrophenyl acetate. Binds glutathione. This is Glutathione S-transferase LANCL1 from Danio rerio (Zebrafish).